The primary structure comprises 768 residues: Probable beta-glucosidase M (768 aa).

A signal peptide spans 1 to 19 (MHAIAGLTGLLAGVSLSYA). Asparagine 25, asparagine 72, and asparagine 259 each carry an N-linked (GlcNAc...) asparagine glycan. Residue aspartate 287 is part of the active site. N-linked (GlcNAc...) asparagine glycans are attached at residues asparagine 315, asparagine 322, asparagine 394, asparagine 434, asparagine 472, asparagine 543, and asparagine 651.

The protein belongs to the glycosyl hydrolase 3 family.

The protein resides in the secreted. It catalyses the reaction Hydrolysis of terminal, non-reducing beta-D-glucosyl residues with release of beta-D-glucose.. It participates in glycan metabolism; cellulose degradation. In terms of biological role, beta-glucosidases are one of a number of cellulolytic enzymes involved in the degradation of cellulosic biomass. Catalyzes the last step releasing glucose from the inhibitory cellobiose. This Aspergillus oryzae (strain ATCC 42149 / RIB 40) (Yellow koji mold) protein is Probable beta-glucosidase M (bglM).